The chain runs to 499 residues: Catalase (499 aa).

The disordered stretch occupies residues 1–25 (MTDRPIMTTSAGAPIPDNQNSLTAG). A compositionally biased stretch (polar residues) spans 7-23 (MTTSAGAPIPDNQNSLT). Active-site residues include histidine 55 and asparagine 127. Residue tyrosine 337 coordinates heme.

The protein belongs to the catalase family. As to quaternary structure, homotetramer. The cofactor is heme.

It localises to the periplasm. It catalyses the reaction 2 H2O2 = O2 + 2 H2O. In terms of biological role, decomposes hydrogen peroxide into water and oxygen; serves to protect cells from the toxic effects of hydrogen peroxide. The polypeptide is Catalase (katA) (Brucella abortus biovar 1 (strain 9-941)).